The following is a 142-amino-acid chain: Centromere protein S (142 aa).

The tract at residues 107–142 (LKGKAKKKRKPEDESRSSRESMAEELDGAEELQSES) is disordered. Basic and acidic residues predominate over residues 116–128 (KPEDESRSSRESM). Residues 129 to 142 (AEELDGAEELQSES) show a composition bias toward acidic residues.

It belongs to the TAF9 family. CENP-S/MHF1 subfamily. As to quaternary structure, heterodimer with CENPX, sometimes called MHF; this interaction stabilizes both partners. MHF heterodimers can assemble to form tetrameric structures. MHF also coassemble with CENPT-CENPW heterodimers at centromeres to form the tetrameric CENP-T-W-S-X complex. Forms a discrete complex with FANCM and CENPX, called FANCM-MHF; this interaction, probably mediated by direct binding between CENPS and FANCM, leads to synergistic activation of double-stranded DNA binding and strongly stimulates FANCM-mediated DNA remodeling. Recruited by FANCM to the Fanconi anemia (FA) core complex, which consists of CENPS, CENPX, FANCA, FANCB, FANCC, FANCE, FANCF, FANCG, FANCL, FANCM, FAAP24 and FAAP100. The FA core complex associates with Bloom syndrome (BLM) complex, which consists of at least BLM, DNA topoisomerase 3-alpha (TOP3A), RMI1/BLAP75, RPA1/RPA70 and RPA2/RPA32. The super complex between FA and BLM is called BRAFT. Component of the CENPA-CAD complex, composed of CENPI, CENPK, CENPL, CENPO, CENPP, CENPQ, CENPR and CENPS. The CENPA-CAD complex is probably recruited on centromeres by the CENPA-NAC complex, at least composed of CENPA, CENPC, CENPH, CENPM, CENPN, CENPT and CENPU.

It localises to the nucleus. The protein resides in the chromosome. The protein localises to the centromere. It is found in the kinetochore. Its function is as follows. DNA-binding component of the Fanconi anemia (FA) core complex. Required for the normal activation of the FA pathway, leading to monoubiquitination of the FANCI-FANCD2 complex in response to DNA damage, cellular resistance to DNA cross-linking drugs, and prevention of chromosomal breakage. In complex with CENPX (MHF heterodimer), crucial cofactor for FANCM in both binding and ATP-dependent remodeling of DNA. Stabilizes FANCM. In complex with CENPX and FANCM (but not other FANC proteins), rapidly recruited to blocked forks and promotes gene conversion at blocked replication forks. In complex with CENPT, CENPW and CENPX (CENP-T-W-S-X heterotetramer), involved in the formation of a functional kinetochore outer plate, which is essential for kinetochore-microtubule attachment and faithful mitotic progression. As a component of MHF and CENP-T-W-S-X complexes, binds DNA and bends it to form a nucleosome-like structure. DNA-binding function is fulfilled in the presence of CENPX, with the following preference for DNA substates: Holliday junction &gt; double-stranded &gt; splay arm &gt; single-stranded. Does not bind DNA on its own. The protein is Centromere protein S (Cenps) of Mus musculus (Mouse).